We begin with the raw amino-acid sequence, 381 residues long: Cytochrome b (381 aa).

4 helical membrane-spanning segments follow: residues 34–54 (FGSLLGLCLIIQILTGLFLAM), 78–99 (WLIRNIHANGASLFFICVYLHI), 114–134 (WNIGVILLFLLMATAFVGYVL), and 179–199 (FFAFHFLLPFLILALTIIHLL). Heme b is bound by residues histidine 84 and histidine 98. Positions 183 and 197 each coordinate heme b. Histidine 202 is an a ubiquinone binding site. Helical transmembrane passes span 227–247 (YKDLLGFFVMIFFLAVFALFM), 289–309 (LGGVLALLFSIFILMLVPLLH), 321–341 (MTQIFFWLLVANSIILTWIGG), and 348–368 (FIMVGQIASISYFSLFLIIMP).

This sequence belongs to the cytochrome b family. As to quaternary structure, the cytochrome bc1 complex contains 3 respiratory subunits (MT-CYB, CYC1 and UQCRFS1), 2 core proteins (UQCRC1 and UQCRC2) and probably 6 low-molecular weight proteins. Heme b is required as a cofactor.

Its subcellular location is the mitochondrion inner membrane. In terms of biological role, component of the ubiquinol-cytochrome c reductase complex (complex III or cytochrome b-c1 complex) that is part of the mitochondrial respiratory chain. The b-c1 complex mediates electron transfer from ubiquinol to cytochrome c. Contributes to the generation of a proton gradient across the mitochondrial membrane that is then used for ATP synthesis. This chain is Cytochrome b (mt-cyb), found in Carcharhinus plumbeus (Sandbar shark).